We begin with the raw amino-acid sequence, 1914 residues long: Zinc finger protein Rlf (1914 aa).

Ser-41 bears the Phosphoserine mark. Over residues 521 to 540 (KQYRRRDLTDQHKEKRDKKP) the composition is skewed to basic and acidic residues. The tract at residues 521–541 (KQYRRRDLTDQHKEKRDKKPI) is disordered. The C2H2-type 1 zinc-finger motif lies at 582–604 (YTCPVCIKKFKRKEMFVPHVMEH). Lys-622 participates in a covalent cross-link: Glycyl lysine isopeptide (Lys-Gly) (interchain with G-Cter in SUMO2). Ser-632 and Ser-634 each carry phosphoserine. 5 C2H2-type zinc fingers span residues 671-696 (YPCPGTDCSRVFKQFKYLSVHLKAEH), 714-736 (EKCTYCRRHFMSAFHLREHEQVH), 742-766 (YMCVSIDCYARFGSVNELLNHKQKH), 771-795 (YKCELNGCNIVFSDLGQLYHHEAQH), and 801-825 (YTCNFLGCKKFYYSKIEYQNHLSMH). A Glycyl lysine isopeptide (Lys-Gly) (interchain with G-Cter in SUMO2) cross-link involves residue Lys-839. The disordered stretch occupies residues 882–907 (TETAENLKENSDSNSSDQLSHSSSAS). Low complexity predominate over residues 893 to 907 (DSNSSDQLSHSSSAS). The C2H2-type 7 zinc-finger motif lies at 954–979 (FTCGFDGCGSTYKNARGMQKHLRKVH). Residues 993 to 1028 (LFPSLGNEHNQTTEKLDAEPKPCSDTNSDSPDEGLD) are disordered. The span at 1003–1014 (QTTEKLDAEPKP) shows a compositional bias: basic and acidic residues. C2H2-type zinc fingers lie at residues 1127-1152 (FFCELQGCKYEFVTREALLMHYLKKH) and 1172-1195 (FQCHICQRSFTRKTHLRIHYKNKH). The tract at residues 1231 to 1290 (LGGDPSSNSEKPHCHPKKDECSSETDLESSCEETESKTSDISSPIGSHREEQEGREGRGS) is disordered. Over residues 1240–1251 (EKPHCHPKKDEC) the composition is skewed to basic and acidic residues. The span at 1252 to 1263 (SSETDLESSCEE) shows a compositional bias: acidic residues. A compositionally biased stretch (basic and acidic residues) spans 1277–1289 (SHREEQEGREGRG). 5 C2H2-type zinc fingers span residues 1310–1335 (FHCIHKTCNSSFTNLKGLIRHYRTVH), 1362–1387 (FACKYKECNKRFLCSKALAKHCSDSH), 1407–1432 (FSCNQPQCPAVFYTFNKLKHHLMEQH), 1444–1469 (IHCDLNGCGQIFTHRSNYSQHVYYRH), and 1549–1574 (YPCMVQGCLSVVKLESSIVRHYKRTH). A Glycyl lysine isopeptide (Lys-Gly) (interchain with G-Cter in SUMO2) cross-link involves residue Lys-1423. Glycyl lysine isopeptide (Lys-Gly) (interchain with G-Cter in SUMO2) cross-links involve residues Lys-1599 and Lys-1611. The interval 1620 to 1654 (SERTEHSHSPGDSSAPIQNTDCCHSSERDGGQKGC) is disordered. Residues 1629–1642 (PGDSSAPIQNTDCC) are compositionally biased toward polar residues. Lys-1696 is covalently cross-linked (Glycyl lysine isopeptide (Lys-Gly) (interchain with G-Cter in SUMO2)). The segment at 1725–1757 (ESETRQHSSGQENTVKNPTHVPKENFRKHSQPR) is disordered. Over residues 1731-1741 (HSSGQENTVKN) the composition is skewed to polar residues. Lys-1762 is covalently cross-linked (Glycyl lysine isopeptide (Lys-Gly) (interchain with G-Cter in SUMO2)). A disordered region spans residues 1783–1807 (KEDDFDDWEPSEHLTLSNSSQSSND). Residues 1796–1807 (LTLSNSSQSSND) are compositionally biased toward polar residues.

The protein belongs to the krueppel C2H2-type zinc-finger protein family. In terms of assembly, interacts with RIT1 and RIT2. As to expression, widely expressed in fetal and adult tissues.

The protein resides in the nucleus. Its function is as follows. May be involved in transcriptional regulation. The sequence is that of Zinc finger protein Rlf (RLF) from Homo sapiens (Human).